Consider the following 500-residue polypeptide: Protein gar2 (500 aa).

Composition is skewed to basic and acidic residues over residues 1 to 41 (MAKK…KEIA) and 59 to 68 (KRASSPEPSK). The tract at residues 1-262 (MAKKDKTSVK…TKPSQDSNET (262 aa)) is disordered. A compositionally biased stretch (basic residues) spans 69–78 (KSVKKQKKSK). A compositionally biased stretch (low complexity) spans 90-120 (ESSSSESESSSSESESSSSESESSSSESSSS). Basic and acidic residues predominate over residues 126–137 (VIVKTEEKKESS). Phosphoserine occurs at positions 143, 144, and 146. Residues 152-163 (AVVKIEEKKESS) show a composition bias toward basic and acidic residues. Residues 164–182 (SDSSSESSSSESESESSSS) are compositionally biased toward low complexity. The span at 191 to 201 (VEKTEEKKEGS) shows a compositional bias: basic and acidic residues. Low complexity predominate over residues 202–218 (SESSSDSESSSDSSSES). Positions 219-233 (GDSDSSSDSESESSS) are enriched in acidic residues. A compositionally biased stretch (basic and acidic residues) spans 234–250 (EDEKKRKAEPASEERPA). RRM domains follow at residues 263–341 (CTVF…LSNP) and 366–443 (DTVF…FSTP). Positions 441 to 500 (STPRTGGGSRGGRGGFGGRGGFGGRGGFGGGRGRGRGGARSGNPNRGSVAPFSGNKVTFD) are disordered. The segment covering 445–480 (TGGGSRGGRGGFGGRGGFGGRGGFGGGRGRGRGGAR) has biased composition (gly residues).

Belongs to the RRM GAR family.

The protein resides in the nucleus. It localises to the nucleolus. Functionally, helps the assembly of pre-ribosomal particles containing 18S rRNA. This Schizosaccharomyces pombe (strain 972 / ATCC 24843) (Fission yeast) protein is Protein gar2 (gar2).